Here is a 59-residue protein sequence, read N- to C-terminus: Large ribosomal subunit protein bL32 (59 aa).

The interval 1-59 (MAVQQNRKTPSKRGMRRSHDALSGPALSVEPQTGETHRRHHVSPDGYYRGRKVMQGRED) is disordered. The span at 49–59 (RGRKVMQGRED) shows a compositional bias: basic residues.

The protein belongs to the bacterial ribosomal protein bL32 family.

The protein is Large ribosomal subunit protein bL32 of Alkalilimnicola ehrlichii (strain ATCC BAA-1101 / DSM 17681 / MLHE-1).